The following is a 303-amino-acid chain: Ferrochelatase (303 aa).

The Fe cation site is built by His-185 and Glu-262.

Belongs to the ferrochelatase family.

The protein resides in the cytoplasm. The catalysed reaction is heme b + 2 H(+) = protoporphyrin IX + Fe(2+). The protein operates within porphyrin-containing compound metabolism; protoheme biosynthesis; protoheme from protoporphyrin-IX: step 1/1. Functionally, catalyzes the ferrous insertion into protoporphyrin IX. The protein is Ferrochelatase of Campylobacter jejuni subsp. jejuni serotype O:2 (strain ATCC 700819 / NCTC 11168).